The following is a 1234-amino-acid chain: 1-phosphatidylinositol 4,5-bisphosphate phosphodiesterase beta-3 (1234 aa).

Ala2 bears the N-acetylalanine mark. The PI-PLC X-box domain occupies 318–468; it reads DMTQPLSAYF…LMGRILVKNK (151 aa). Residues His332 and His379 contribute to the active site. The segment at 467 to 587 is disordered; that stretch reads NKKRHRPSAG…GTASSEVNAT (121 aa). A phosphoserine mark is found at Ser474, Ser490, Ser495, and Ser537. A compositionally biased stretch (low complexity) spans 488 to 515; the sequence is EQSNSALSESSAATEPSSPQLGSPSSDS. A compositionally biased stretch (acidic residues) spans 555–567; sequence REDEEEDEEEEEQ. Residues 576 to 587 are compositionally biased toward polar residues; that stretch reads DEGTASSEVNAT. Residues 590-706 enclose the PI-PLC Y-box domain; the sequence is MSTLVNYIEP…GYLLKPEFMR (117 aa). The region spanning 707–835 is the C2 domain; the sequence is RPDKSFDPFT…RNEANQPLCL (129 aa). A compositionally biased stretch (polar residues) spans 887-908; the sequence is AGQETCQDTQSQQLGSQPSSNP. The disordered stretch occupies residues 887–937; it reads AGQETCQDTQSQQLGSQPSSNPTPSPLDASPRRPPGPTTSPASTSLSSPGQ. The span at 925–936 shows a compositional bias: low complexity; it reads TSPASTSLSSPG. A phosphoserine mark is found at Ser926 and Ser1105. The tract at residues 1198–1234 is disordered; sequence GLGDGPLVACASNGHAPGSSGHLSGADSESQEENTQL. The segment at 1231-1234 is interaction with SHANK2; the sequence is NTQL.

As to quaternary structure, interacts with SHANK2. Interacts with LPAR2. The cofactor is Ca(2+).

Its subcellular location is the cytoplasm. The protein resides in the membrane. It is found in the nucleus. The enzyme catalyses a 1,2-diacyl-sn-glycero-3-phospho-(1D-myo-inositol-4,5-bisphosphate) + H2O = 1D-myo-inositol 1,4,5-trisphosphate + a 1,2-diacyl-sn-glycerol + H(+). The catalysed reaction is a 1,2-diacyl-sn-glycero-3-phospho-(1D-myo-inositol) + H2O = 1D-myo-inositol 1-phosphate + a 1,2-diacyl-sn-glycerol + H(+). Its activity is regulated as follows. Activated by G(q)/G(11) G alpha proteins in response to ligand-binding to G protein-coupled receptors. Functionally, catalyzes the production of the second messenger molecules diacylglycerol (DAG) and inositol 1,4,5-trisphosphate (IP3). Key transducer of G protein-coupled receptor signaling: activated by G(q)/G(11) G alpha proteins downstream of G protein-coupled receptors activation. In neutrophils, participates in a phospholipase C-activating N-formyl peptide-activated GPCR (G protein-coupled receptor) signaling pathway by promoting RASGRP4 activation by DAG, to promote neutrophil functional responses. This chain is 1-phosphatidylinositol 4,5-bisphosphate phosphodiesterase beta-3, found in Homo sapiens (Human).